The chain runs to 78 residues: Small ribosomal subunit protein bS18 (78 aa).

Belongs to the bacterial ribosomal protein bS18 family. As to quaternary structure, part of the 30S ribosomal subunit. Forms a tight heterodimer with protein bS6.

Binds as a heterodimer with protein bS6 to the central domain of the 16S rRNA, where it helps stabilize the platform of the 30S subunit. This is Small ribosomal subunit protein bS18 from Limosilactobacillus fermentum (strain NBRC 3956 / LMG 18251) (Lactobacillus fermentum).